A 446-amino-acid polypeptide reads, in one-letter code: Argininosuccinate lyase (446 aa).

Belongs to the lyase 1 family. Argininosuccinate lyase subfamily.

Its subcellular location is the cytoplasm. It catalyses the reaction 2-(N(omega)-L-arginino)succinate = fumarate + L-arginine. It participates in amino-acid biosynthesis; L-arginine biosynthesis; L-arginine from L-ornithine and carbamoyl phosphate: step 3/3. The protein is Argininosuccinate lyase of Bacteroides thetaiotaomicron (strain ATCC 29148 / DSM 2079 / JCM 5827 / CCUG 10774 / NCTC 10582 / VPI-5482 / E50).